Here is a 143-residue protein sequence, read N- to C-terminus: UPF0251 protein CA_C3166 (143 aa).

The protein belongs to the UPF0251 family.

The polypeptide is UPF0251 protein CA_C3166 (Clostridium acetobutylicum (strain ATCC 824 / DSM 792 / JCM 1419 / IAM 19013 / LMG 5710 / NBRC 13948 / NRRL B-527 / VKM B-1787 / 2291 / W)).